A 504-amino-acid polypeptide reads, in one-letter code: Fumitremorgin C monooxygenase (504 aa).

The chain crosses the membrane as a helical span at residues 12–32; sequence LGVVGASLIVILGIILLFPLG. C442 provides a ligand contact to heme.

The protein belongs to the cytochrome P450 family. Heme is required as a cofactor.

The protein localises to the membrane. The catalysed reaction is fumitremorgin C + 2 reduced [NADPH--hemoprotein reductase] + 2 O2 = 12alpha,13alpha-dihydroxyfumitremorgin C + 2 oxidized [NADPH--hemoprotein reductase] + 2 H2O + 2 H(+). The protein operates within mycotoxin biosynthesis. Cytochrome P450 monooxygenase; part of the gene cluster that mediates the biosynthesis of fumitremorgins, indole alkaloids that carry not only intriguing chemical structures, but also interesting biological and pharmacological activities. The biosynthesis of fumitremorgin-type alkaloids begins by condensation of the two amino acids L-tryptophan and L-proline to brevianamide F, catalyzed by the non-ribosomal peptide synthetase ftmA. Brevianamide F is then prenylated by the prenyltransferase ftmPT1/ftmB in the presence of dimethylallyl diphosphate, resulting in the formation of tryprostatin B. The three cytochrome P450 monooxygenases, ftmP450-1/ftmC, ftmP450-2/ftmE and ftmP450-3/FtmG, are responsible for the conversion of tryprostatin B to 6-hydroxytryprostatin B, tryprostatin A to fumitremorgin C and fumitremorgin C to 12,13-dihydroxyfumitremorgin C, respectively. The putative methyltransferase ftmMT/ftmD is expected for the conversion of 6-hydroxytryprostatin B to tryprostatin A. FtmPT2/FtmH catalyzes the prenylation of 12,13-dihydroxyfumitre-morgin C in the presence of dimethylallyl diphosphate, resulting in the formation of fumitremorgin B. Fumitremorgin B is further converted to verruculogen by ftmOx1/ftmF via the insertion of an endoperoxide bond between the two prenyl moieties. In some fungal species, verruculogen is further converted to fumitremorgin A, but the enzymes involved in this step have not been identified yet. The chain is Fumitremorgin C monooxygenase from Aspergillus fumigatus (Neosartorya fumigata).